The sequence spans 248 residues: Kallikrein-12 (248 aa).

The signal sequence occupies residues 1–17 (MGLSIFLLLCVLGLSQA). The 225-residue stretch at 22–246 (IFNGTECGRN…YVDWIRMIMR (225 aa)) folds into the Peptidase S1 domain. Residue Asn24 is glycosylated (N-linked (GlcNAc...) asparagine). 6 cysteine pairs are disulfide-bonded: Cys28/Cys161, Cys47/Cys63, Cys133/Cys235, Cys140/Cys206, Cys172/Cys186, and Cys196/Cys222. Catalysis depends on charge relay system residues His62 and Asp108. N-linked (GlcNAc...) asparagine glycosylation is present at Asn163. Ser200 functions as the Charge relay system in the catalytic mechanism.

This sequence belongs to the peptidase S1 family. Kallikrein subfamily.

The protein localises to the secreted. The sequence is that of Kallikrein-12 (KLK12) from Homo sapiens (Human).